The following is a 171-amino-acid chain: uncharacterized protein (171 aa).

Positions 1 to 18 (MRYSKLTMLIPCALLLSA) are cleaved as a signal peptide. The N-palmitoyl cysteine moiety is linked to residue Cys19. The S-diacylglycerol cysteine moiety is linked to residue Cys19.

Its subcellular location is the cell membrane. This is an uncharacterized protein from Escherichia coli (strain K12).